The following is a 348-amino-acid chain: tRNA N6-adenosine threonylcarbamoyltransferase (348 aa).

Fe cation is bound by residues His-109 and His-113. Substrate is bound by residues 136–140, Asp-169, Gly-182, Asp-186, and Asn-284; that span reads TVSGG. Asp-312 serves as a coordination point for Fe cation.

The protein belongs to the KAE1 / TsaD family. It depends on Fe(2+) as a cofactor.

The protein localises to the cytoplasm. The catalysed reaction is L-threonylcarbamoyladenylate + adenosine(37) in tRNA = N(6)-L-threonylcarbamoyladenosine(37) in tRNA + AMP + H(+). Its function is as follows. Required for the formation of a threonylcarbamoyl group on adenosine at position 37 (t(6)A37) in tRNAs that read codons beginning with adenine. Is involved in the transfer of the threonylcarbamoyl moiety of threonylcarbamoyl-AMP (TC-AMP) to the N6 group of A37, together with TsaE and TsaB. TsaD likely plays a direct catalytic role in this reaction. The protein is tRNA N6-adenosine threonylcarbamoyltransferase of Chlorobium luteolum (strain DSM 273 / BCRC 81028 / 2530) (Pelodictyon luteolum).